The sequence spans 623 residues: MFDFEYQLKNLPDKPGVYIMKNSLGEVIYVGKAKILKNRVRQYFRNSKNHSEKVKAMVKNISEFEYIVTDSEIEALILECNLIKKYKPRYNILLKDDKHYPFIKVTMNEDFPRIIVTRNMVKDGSKYFGPYPDVSAVHETVDLMRRIFPIRTCKKYIKENGENIRPCLNYHIKRCNAPCAGLISKEEYGEIIKKAVGLISGKNNDIIRELKEEMEKASMNLDFEKAADLRDKMLAAQKVTEKQKIIIGNFENEDYISLYSDEKDSCVQVFFLREGKIVGREHFIVENTAGENEGDIIGEFIKEFYSGTAYVPKSIYASAGEDLNLLENWLTMKRGSKVEIKIPQKGEKKDIIEMVKRNSKITLEKFKIKLLSDKRLNENILIEMTEVIGLEEVPHRIEAYDISNIQGVDSVGSMIVFEEGKPKNSDYRRFKIKTVKGANDYDSMREILTRRFKHGLEEVNSIVNKNLSLSAGKFCVFPDLILMDGGKGQVNIALEVLKEFNIDIPVCGMVKDDRHNTRGIIYNNNEIDIKSNRKIINFVTRVQDEVHRFAITYHRSLRDKRVLHSVLDDIPYIGEKRRKALLKHFGSIENIKKATYEELMKTPSIDKKAAESIVSYFRGRKGE.

The GIY-YIG domain maps to 13–92 (DKPGVYIMKN…IKKYKPRYNI (80 aa)). The region spanning 204 to 239 (NDIIRELKEEMEKASMNLDFEKAADLRDKMLAAQKV) is the UVR domain.

It belongs to the UvrC family. As to quaternary structure, interacts with UvrB in an incision complex.

The protein resides in the cytoplasm. Its function is as follows. The UvrABC repair system catalyzes the recognition and processing of DNA lesions. UvrC both incises the 5' and 3' sides of the lesion. The N-terminal half is responsible for the 3' incision and the C-terminal half is responsible for the 5' incision. The sequence is that of UvrABC system protein C from Clostridium acetobutylicum (strain ATCC 824 / DSM 792 / JCM 1419 / IAM 19013 / LMG 5710 / NBRC 13948 / NRRL B-527 / VKM B-1787 / 2291 / W).